Consider the following 330-residue polypeptide: Ketol-acid reductoisomerase (NADP(+)) (330 aa).

Positions 1-181 constitute a KARI N-terminal Rossmann domain; sequence MKVYYEQDAT…GGARSGVIET (181 aa). NADP(+) is bound by residues 24–27, R47, and 82–85; these read YGSQ and DQVQ. H107 is a catalytic residue. Position 133 (G133) interacts with NADP(+). Residues 182-327 form the KARI C-terminal knotted domain; that stretch reads TFKEETETDL…GKLRGMMPWL (146 aa). Mg(2+) is bound by residues D190, E194, E226, and E230. Residue S251 participates in substrate binding.

Belongs to the ketol-acid reductoisomerase family. Requires Mg(2+) as cofactor.

The catalysed reaction is (2R)-2,3-dihydroxy-3-methylbutanoate + NADP(+) = (2S)-2-acetolactate + NADPH + H(+). The enzyme catalyses (2R,3R)-2,3-dihydroxy-3-methylpentanoate + NADP(+) = (S)-2-ethyl-2-hydroxy-3-oxobutanoate + NADPH + H(+). It participates in amino-acid biosynthesis; L-isoleucine biosynthesis; L-isoleucine from 2-oxobutanoate: step 2/4. Its pathway is amino-acid biosynthesis; L-valine biosynthesis; L-valine from pyruvate: step 2/4. In terms of biological role, involved in the biosynthesis of branched-chain amino acids (BCAA). Catalyzes an alkyl-migration followed by a ketol-acid reduction of (S)-2-acetolactate (S2AL) to yield (R)-2,3-dihydroxy-isovalerate. In the isomerase reaction, S2AL is rearranged via a Mg-dependent methyl migration to produce 3-hydroxy-3-methyl-2-ketobutyrate (HMKB). In the reductase reaction, this 2-ketoacid undergoes a metal-dependent reduction by NADPH to yield (R)-2,3-dihydroxy-isovalerate. The chain is Ketol-acid reductoisomerase (NADP(+)) from Nitratidesulfovibrio vulgaris (strain DSM 19637 / Miyazaki F) (Desulfovibrio vulgaris).